A 22-amino-acid chain; its full sequence is Pectinesterase (22 aa).

The active-site Proton donor is the Asp6. The substrate site is built by Arg19 and Trp21.

Belongs to the pectinesterase family.

The protein localises to the secreted. The protein resides in the cell wall. The catalysed reaction is [(1-&gt;4)-alpha-D-galacturonosyl methyl ester](n) + n H2O = [(1-&gt;4)-alpha-D-galacturonosyl](n) + n methanol + n H(+). The protein operates within glycan metabolism; pectin degradation; 2-dehydro-3-deoxy-D-gluconate from pectin: step 1/5. The protein is Pectinesterase of Capsicum chinense (Scotch bonnet).